We begin with the raw amino-acid sequence, 205 residues long: Probable 3'-5' exonuclease KapD (205 aa).

Residues L6–F173 form the Exonuclease domain. The Mg(2+) site is built by D10, E12, and D104. E12 functions as the Proton acceptor in the catalytic mechanism. E12 provides a ligand contact to AMP. H160 acts as the Proton acceptor in catalysis. H160 is a binding site for AMP. Position 165 (D165) interacts with Mg(2+).

Mg(2+) is required as a cofactor.

Specifically inhibits the KinA pathway to sporulation. The protein is Probable 3'-5' exonuclease KapD (kapD) of Bacillus subtilis (strain 168).